Consider the following 125-residue polypeptide: Ribonuclease P protein component (125 aa).

The protein belongs to the RnpA family. Consists of a catalytic RNA component (M1 or rnpB) and a protein subunit.

The catalysed reaction is Endonucleolytic cleavage of RNA, removing 5'-extranucleotides from tRNA precursor.. Its function is as follows. RNaseP catalyzes the removal of the 5'-leader sequence from pre-tRNA to produce the mature 5'-terminus. It can also cleave other RNA substrates such as 4.5S RNA. The protein component plays an auxiliary but essential role in vivo by binding to the 5'-leader sequence and broadening the substrate specificity of the ribozyme. The sequence is that of Ribonuclease P protein component from Clostridium botulinum (strain Alaska E43 / Type E3).